The following is a 199-amino-acid chain: Glycerol-3-phosphate acyltransferase (199 aa).

5 consecutive transmembrane segments (helical) span residues 5–25, 56–76, 83–103, 118–138, and 141–161; these read VLTI…SAVL, SAAL…YLAF, IALG…IFFG, APIG…LVLV, and YSSF…WWLD.

Belongs to the PlsY family. As to quaternary structure, probably interacts with PlsX.

The protein resides in the cell inner membrane. The catalysed reaction is an acyl phosphate + sn-glycerol 3-phosphate = a 1-acyl-sn-glycero-3-phosphate + phosphate. Its pathway is lipid metabolism; phospholipid metabolism. Catalyzes the transfer of an acyl group from acyl-phosphate (acyl-PO(4)) to glycerol-3-phosphate (G3P) to form lysophosphatidic acid (LPA). This enzyme utilizes acyl-phosphate as fatty acyl donor, but not acyl-CoA or acyl-ACP. The protein is Glycerol-3-phosphate acyltransferase of Shewanella halifaxensis (strain HAW-EB4).